We begin with the raw amino-acid sequence, 71 residues long: Conotoxin Ca5.1 (71 aa).

Positions 1 to 19 (MRCVPVFIILLLLASPAAS) are cleaved as a signal peptide. Positions 20-56 (DPLEKRIQSDLIRAALEDADTKNDPRILEDIVSTALA) are excised as a propeptide.

This sequence belongs to the conotoxin T superfamily. In terms of processing, contains 2 disulfide bonds that can be either 'C1-C3, C2-C4' or 'C1-C4, C2-C3', since these disulfide connectivities have been observed for conotoxins with cysteine framework V (for examples, see AC P0DQQ7 and AC P81755). As to expression, expressed by the venom duct.

It is found in the secreted. The sequence is that of Conotoxin Ca5.1 from Conus caracteristicus (Characteristic cone).